The sequence spans 184 residues: Myeloproliferative leukemia protein (184 aa).

The WSXWS motif motif lies at 26 to 30; sequence WSAWS. Residues 44–64 form a helical membrane-spanning segment; sequence ITLVTALLLVLSLSALLGLLL. Residues 80–88 carry the Box 1 motif motif; the sequence is LWPSLPDLH.

This sequence belongs to the type I cytokine receptor family. Type 1 subfamily.

The protein localises to the membrane. Functionally, truncated form of the receptor for thrombopoietin. In Mus musculus (Mouse), this protein is Myeloproliferative leukemia protein (V-MPL).